Consider the following 74-residue polypeptide: Ferredoxin-like protein in nif region (74 aa).

The 29-residue stretch at 2–30 (PFKIIASQCTSCSACEPLCPNVAISEKGG) folds into the 4Fe-4S ferredoxin-type domain. [4Fe-4S] cluster-binding residues include cysteine 10, cysteine 13, cysteine 16, cysteine 20, cysteine 39, cysteine 51, and cysteine 55.

[4Fe-4S] cluster is required as a cofactor.

The polypeptide is Ferredoxin-like protein in nif region (frxA) (Bradyrhizobium diazoefficiens (strain JCM 10833 / BCRC 13528 / IAM 13628 / NBRC 14792 / USDA 110)).